Reading from the N-terminus, the 158-residue chain is NAD(P)H-quinone oxidoreductase subunit J, chloroplastic (158 aa).

Belongs to the complex I 30 kDa subunit family. As to quaternary structure, NDH is composed of at least 16 different subunits, 5 of which are encoded in the nucleus.

It is found in the plastid. Its subcellular location is the chloroplast thylakoid membrane. The catalysed reaction is a plastoquinone + NADH + (n+1) H(+)(in) = a plastoquinol + NAD(+) + n H(+)(out). The enzyme catalyses a plastoquinone + NADPH + (n+1) H(+)(in) = a plastoquinol + NADP(+) + n H(+)(out). Functionally, NDH shuttles electrons from NAD(P)H:plastoquinone, via FMN and iron-sulfur (Fe-S) centers, to quinones in the photosynthetic chain and possibly in a chloroplast respiratory chain. The immediate electron acceptor for the enzyme in this species is believed to be plastoquinone. Couples the redox reaction to proton translocation, and thus conserves the redox energy in a proton gradient. The chain is NAD(P)H-quinone oxidoreductase subunit J, chloroplastic from Solanum lycopersicum (Tomato).